The chain runs to 205 residues: Holliday junction branch migration complex subunit RuvA (205 aa).

Residues 1–64 (MIGKLKGVVD…EDMIRLYGFR (64 aa)) form a domain I region. Residues 65 to 143 (SDAEREWFRL…AFAPVDPALI (79 aa)) form a domain II region. The tract at residues 144–152 (RLAGAVEER) is flexible linker. Residues 153–205 (TAPQPVADAISALVNLGYPQIQASAAVAAALQGAGEGAEAKTLIRLGLRELAR) are domain III.

Belongs to the RuvA family. Homotetramer. Forms an RuvA(8)-RuvB(12)-Holliday junction (HJ) complex. HJ DNA is sandwiched between 2 RuvA tetramers; dsDNA enters through RuvA and exits via RuvB. An RuvB hexamer assembles on each DNA strand where it exits the tetramer. Each RuvB hexamer is contacted by two RuvA subunits (via domain III) on 2 adjacent RuvB subunits; this complex drives branch migration. In the full resolvosome a probable DNA-RuvA(4)-RuvB(12)-RuvC(2) complex forms which resolves the HJ.

The protein localises to the cytoplasm. In terms of biological role, the RuvA-RuvB-RuvC complex processes Holliday junction (HJ) DNA during genetic recombination and DNA repair, while the RuvA-RuvB complex plays an important role in the rescue of blocked DNA replication forks via replication fork reversal (RFR). RuvA specifically binds to HJ cruciform DNA, conferring on it an open structure. The RuvB hexamer acts as an ATP-dependent pump, pulling dsDNA into and through the RuvAB complex. HJ branch migration allows RuvC to scan DNA until it finds its consensus sequence, where it cleaves and resolves the cruciform DNA. This chain is Holliday junction branch migration complex subunit RuvA, found in Methylobacterium nodulans (strain LMG 21967 / CNCM I-2342 / ORS 2060).